The following is a 450-amino-acid chain: Tubulin alpha chain (450 aa).

Gln-11 lines the GTP pocket. Lys-40 carries the post-translational modification N6-acetyllysine. GTP-binding residues include Glu-71, Ser-140, Gly-144, Thr-145, Thr-179, Asn-206, and Asn-228. Glu-71 provides a ligand contact to Mg(2+). Glu-254 is an active-site residue.

The protein belongs to the tubulin family. In terms of assembly, dimer of alpha and beta chains. A typical microtubule is a hollow water-filled tube with an outer diameter of 25 nm and an inner diameter of 15 nM. Alpha-beta heterodimers associate head-to-tail to form protofilaments running lengthwise along the microtubule wall with the beta-tubulin subunit facing the microtubule plus end conferring a structural polarity. Microtubules usually have 13 protofilaments but different protofilament numbers can be found in some organisms and specialized cells. The cofactor is Mg(2+). In terms of processing, undergoes a tyrosination/detyrosination cycle, the cyclic removal and re-addition of a C-terminal tyrosine residue by the enzymes tubulin tyrosine carboxypeptidase (TTCP) and tubulin tyrosine ligase (TTL), respectively. Post-translationally, acetylation of alpha chains at Lys-40 stabilizes microtubules and affects affinity and processivity of microtubule motors. This modification has a role in multiple cellular functions, ranging from cell motility, cell cycle progression or cell differentiation to intracellular trafficking and signaling.

The protein resides in the cytoplasm. The protein localises to the cytoskeleton. It catalyses the reaction GTP + H2O = GDP + phosphate + H(+). Functionally, tubulin is the major constituent of microtubules, a cylinder consisting of laterally associated linear protofilaments composed of alpha- and beta-tubulin heterodimers. Microtubules grow by the addition of GTP-tubulin dimers to the microtubule end, where a stabilizing cap forms. Below the cap, tubulin dimers are in GDP-bound state, owing to GTPase activity of alpha-tubulin. The protein is Tubulin alpha chain of Haemonchus contortus (Barber pole worm).